The chain runs to 304 residues: Small glutamine-rich tetratricopeptide repeat-containing protein beta (304 aa).

TPR repeat units follow at residues 15-49 (LREQ…SPED), 85-118 (ADQL…DPNN), 119-152 (AVYY…DSKY), and 153-186 (SKAY…DPEN). The residue at position 131 (K131) is an N6-acetyllysine. 3 positions are modified to phosphoserine: S293, S295, and S297.

It belongs to the SGT family. As to quaternary structure, homooligomerize.

Co-chaperone that binds directly to HSC70 and HSP70 and regulates their ATPase activity. This chain is Small glutamine-rich tetratricopeptide repeat-containing protein beta (SGTB), found in Homo sapiens (Human).